Reading from the N-terminus, the 463-residue chain is Myocyte-specific enhancer factor 2C (463 aa).

Residues 3–57 (RKKIQITRIMDERNRQVTFTKRKFGLMKKAYELSVLCDCEIALIIFNSTNKLFQY) form the MADS-box domain. Position 4 is an N6-acetyllysine (Lys-4). Residues 58–86 (ASTDMDKVLLKYTEYNEPHESRTNSDIVE) constitute a DNA-binding region (mef2-type). Residue Ser-59 is modified to Phosphoserine; by CK2. 2 positions are modified to phosphoserine: Ser-98 and Ser-104. An N6-acetyllysine mark is found at Lys-114 and Lys-117. The segment at 178-223 (NSMSPGVTHRPPSAGNTGGLMGGDLTSGAGTSAGNGYGNPRNSPGL) is disordered. Ser-220 and Ser-226 each carry phosphoserine. An N6-acetyllysine mark is found at Lys-232 and Lys-237. Ser-238 carries the post-translational modification Phosphoserine. Residues Lys-250 and Lys-262 each carry the N6-acetyllysine modification. Phosphothreonine; by MAPK7 and MAPK14 occurs at positions 283 and 290. Residues 358–389 (ACTSTHLSQSSNLSLPSTQSLNIKSEPVSPPR) are transcription repressor. The span at 365–380 (SQSSNLSLPSTQSLNI) shows a compositional bias: polar residues. A disordered region spans residues 365–463 (SQSSNLSLPS…RMRLSEGWAT (99 aa)). Lys-381 participates in a covalent cross-link: Glycyl lysine isopeptide (Lys-Gly) (interchain with G-Cter in SUMO). A Phosphoserine; by CDK5 modification is found at Ser-386. Ser-409 carries the post-translational modification Phosphoserine; by MAPK7. Low complexity predominate over residues 409–422 (SPVDSLSSCSSSYD). Residues 423-433 (GSDREDHRNEF) show a composition bias toward basic and acidic residues. Ser-435 is subject to Phosphoserine.

In terms of assembly, forms a complex with class II HDACs in undifferentiating cells. On myogenic differentiation, HDACs are released into the cytoplasm allowing MEF2s to interact with other proteins for activation. Interacts with EP300 in differentiating cells; the interaction acetylates MEF2C leading to increased DNA binding and activation. Interacts with HDAC7 and CARM1. Interacts with HDAC4, HDAC7 and HDAC9; the interaction with HDACs represses transcriptional activity. Interacts with LPIN1. Interacts with MYOCD. Interacts with AKAP13. Interacts with FOXK1; the interaction inhibits MEF2C transactivation activity. Interacts (via N-terminus) with HABP4; this interaction decreases DNA-binding activity of MEF2C in myocardial cells in response to mechanical stress. Interacts with JPH2; interaction specifically takes place with the Junctophilin-2 N-terminal fragment cleavage product of JPH2. Interacts (via MADS box) with SOX18. Interacts with PHF7; the interaction promotes MEF2C binding to its transcription targets. In terms of processing, phosphorylated on Ser-59; which enhances DNA binding activity. Phosphorylated on Ser-386; which is required for Lys-381 sumoylation and inhibits transcriptional activity. Acetylated by p300 on several sites in diffentiating myocytes. Acetylation on Lys-4 increases DNA binding and transactivation. Post-translationally, sumoylated on Lys-381 with SUMO2 but not SUMO1; which represses transcriptional activity. In terms of processing, proteolytically cleaved in cerebellar granule neurons on several sites by caspase 3 and caspase 7 following neurotoxicity. Preferentially cleaves the CDK5-mediated hyperphosphorylated form which leads to neuron apoptosis and transcriptional inactivation.

Its subcellular location is the nucleus. The protein localises to the cytoplasm. It localises to the sarcoplasm. In terms of biological role, transcription activator which binds specifically to the MEF2 element present in the regulatory regions of many muscle-specific genes. Controls cardiac morphogenesis and myogenesis, and is also involved in vascular development. Enhances transcriptional activation mediated by SOX18. Plays an essential role in hippocampal-dependent learning and memory by suppressing the number of excitatory synapses and thus regulating basal and evoked synaptic transmission. Crucial for normal neuronal development, distribution, and electrical activity in the neocortex. Necessary for proper development of megakaryocytes and platelets and for bone marrow B-lymphopoiesis. Required for B-cell survival and proliferation in response to BCR stimulation, efficient IgG1 antibody responses to T-cell-dependent antigens and for normal induction of germinal center B-cells. May also be involved in neurogenesis and in the development of cortical architecture. In Sus scrofa (Pig), this protein is Myocyte-specific enhancer factor 2C.